The following is a 286-amino-acid chain: Putative ribosome-inactivating protein (286 aa).

The first 21 residues, 1–21 (MNRFSVLMCLVILSIFHGVPT), serve as a signal peptide directing secretion. Asn-103 and Asn-110 each carry an N-linked (GlcNAc...) asparagine glycan. The active site involves Glu-185. The N-linked (GlcNAc...) asparagine glycan is linked to Asn-252.

It belongs to the ribosome-inactivating protein family. Type 1 RIP subfamily.

It catalyses the reaction Endohydrolysis of the N-glycosidic bond at one specific adenosine on the 28S rRNA.. This chain is Putative ribosome-inactivating protein, found in Cucumis ficifolius (Cucumis figarei).